The primary structure comprises 312 residues: Malate dehydrogenase (312 aa).

NAD(+) is bound by residues 10 to 15 and D34; that span reads GAGNTG. Substrate contacts are provided by R85 and R91. NAD(+) is bound by residues N98 and 121 to 123; that span reads LTN. Substrate-binding residues include N123 and R154. The Proton acceptor role is filled by H178.

Belongs to the LDH/MDH superfamily. MDH type 3 family.

The enzyme catalyses (S)-malate + NAD(+) = oxaloacetate + NADH + H(+). Functionally, catalyzes the reversible oxidation of malate to oxaloacetate. The protein is Malate dehydrogenase of Staphylococcus saprophyticus subsp. saprophyticus (strain ATCC 15305 / DSM 20229 / NCIMB 8711 / NCTC 7292 / S-41).